Consider the following 490-residue polypeptide: COP9 signalosome complex subunit 2 (490 aa).

The span at 1–30 shows a compositional bias: acidic residues; the sequence is MSDDDFMQDSDQEYDFEYEDDEEEDTGDVD. Positions 1–32 are disordered; sequence MSDDDFMQDSDQEYDFEYEDDEEEDTGDVDIE. A PCI domain is found at 250 to 418; sequence SEENWKEAQS…GVLELESRED (169 aa). Positions 469–490 are disordered; it reads DTMRSMGSGKRGRRVGLTQRAY.

Belongs to the CSN2 family. Component of the COP9 signalosome (CSN) complex.

It is found in the cytoplasm. The protein resides in the nucleus. Its function is as follows. Component of the COP9 signalosome (CSN) complex that acts as an regulator of the ubiquitin (Ubl) conjugation pathway by mediating the deneddylation of the cullin subunit of SCF-type E3 ubiquitin-protein ligase complexes. The CSN complex is involved in the regulation of the circadian clock through its control of the stability of the SCF(FWD-1) complex. This chain is COP9 signalosome complex subunit 2 (csn-2), found in Neurospora crassa (strain ATCC 24698 / 74-OR23-1A / CBS 708.71 / DSM 1257 / FGSC 987).